A 236-amino-acid chain; its full sequence is Small ribosomal subunit protein eS6 (236 aa).

This sequence belongs to the eukaryotic ribosomal protein eS6 family. As to quaternary structure, component of the small ribosomal subunit. Part of the small subunit (SSU) processome, composed of more than 70 proteins and the RNA chaperone small nucleolar RNA (snoRNA) U3. Post-translationally, ribosomal protein S6 is the major substrate of protein kinases in eukaryote ribosomes.

The protein localises to the cytoplasm. The protein resides in the nucleus. Its subcellular location is the nucleolus. Its function is as follows. Component of the 40S small ribosomal subunit. Plays an important role in controlling cell growth and proliferation through the selective translation of particular classes of mRNA. Part of the small subunit (SSU) processome, first precursor of the small eukaryotic ribosomal subunit. During the assembly of the SSU processome in the nucleolus, many ribosome biogenesis factors, an RNA chaperone and ribosomal proteins associate with the nascent pre-rRNA and work in concert to generate RNA folding, modifications, rearrangements and cleavage as well as targeted degradation of pre-ribosomal RNA by the RNA exosome. This is Small ribosomal subunit protein eS6 (rps6) from Dictyostelium discoideum (Social amoeba).